The primary structure comprises 218 residues: Small ribosomal subunit protein uS3c (218 aa).

Residues 43 to 118 (IKNYVQKNTR…KLNIAITRIG (76 aa)) form the KH type-2 domain.

This sequence belongs to the universal ribosomal protein uS3 family. As to quaternary structure, part of the 30S ribosomal subunit.

It is found in the plastid. The protein localises to the chloroplast. The sequence is that of Small ribosomal subunit protein uS3c (rps3) from Gossypium barbadense (Sea Island cotton).